The chain runs to 219 residues: Cytidylate kinase (219 aa).

11 to 19 (GTAGSGKTA) is an ATP binding site.

Belongs to the cytidylate kinase family. Type 1 subfamily.

The protein resides in the cytoplasm. It catalyses the reaction CMP + ATP = CDP + ADP. It carries out the reaction dCMP + ATP = dCDP + ADP. In Mesoplasma florum (strain ATCC 33453 / NBRC 100688 / NCTC 11704 / L1) (Acholeplasma florum), this protein is Cytidylate kinase.